We begin with the raw amino-acid sequence, 142 residues long: MATSLDFKTYVDQACRAAEEFVNIYYETMDKRRRALTRLYLDKATLIWNGNAVSGLDALNNFFDTLPSSEFQVNMLDCQPVHEQATQSQTTVLVVTSGTVKFDGNKQHFFNQNFLLTAQSTPNNTVWKIASDCFRFQDWSSS.

Positions 17–136 constitute an NTF2 domain; the sequence is AAEEFVNIYY…WKIASDCFRF (120 aa).

Associates with NXF1, NXF2, NXF3 and NXF5.

It is found in the nucleus. It localises to the cytoplasm. In terms of biological role, regulator of protein export for NES-containing proteins. Also plays a role in mRNA nuclear export. The polypeptide is NTF2-related export protein 2 (Homo sapiens (Human)).